The sequence spans 280 residues: Hydrolase MT0498 (280 aa).

One can recognise a CN hydrolase domain in the interval 1–251 (MRIALAQIRS…PQLLVADIDV (251 aa)). Glu-40 acts as the Proton acceptor in catalysis. Lys-110 (proton donor) is an active-site residue. Cys-146 acts as the Nucleophile in catalysis.

The protein belongs to the carbon-nitrogen hydrolase superfamily. NIT1/NIT2 family.

This chain is Hydrolase MT0498, found in Mycobacterium tuberculosis (strain CDC 1551 / Oshkosh).